Consider the following 1444-residue polypeptide: DNA polymerase III PolC-type (1444 aa).

In terms of domain architecture, Exonuclease spans 421–577; sequence YVVFDVETTG…ADAEATGYLL (157 aa).

This sequence belongs to the DNA polymerase type-C family. PolC subfamily.

The protein localises to the cytoplasm. The enzyme catalyses DNA(n) + a 2'-deoxyribonucleoside 5'-triphosphate = DNA(n+1) + diphosphate. Required for replicative DNA synthesis. This DNA polymerase also exhibits 3' to 5' exonuclease activity. The protein is DNA polymerase III PolC-type of Lacticaseibacillus paracasei (strain ATCC 334 / BCRC 17002 / CCUG 31169 / CIP 107868 / KCTC 3260 / NRRL B-441) (Lactobacillus paracasei).